A 379-amino-acid chain; its full sequence is Cytochrome b (379 aa).

A run of 4 helical transmembrane segments spans residues 33 to 53, 77 to 98, 113 to 133, and 178 to 198; these read FGSLLGVCLMIQILTGLFLAM, WLIRYLHANGASMFFICLFIHV, WNIGIILFLTTMATAFVGYVL, and FFAFHFILPFIITAFALVHLL. Positions 83 and 97 each coordinate heme b. Heme b is bound by residues His-182 and His-196. Residue His-201 coordinates a ubiquinone. 4 helical membrane-spanning segments follow: residues 226–246, 288–308, 320–340, and 347–367; these read IKDLLGIFLLLLALMILALFF, LGGVLALILSILILAIFPLLN, ITQTIYWTFIANLLVLTWIGG, and FTTIGQIASITYFTXIIILMP.

Belongs to the cytochrome b family. In terms of assembly, the cytochrome bc1 complex contains 11 subunits: 3 respiratory subunits (MT-CYB, CYC1 and UQCRFS1), 2 core proteins (UQCRC1 and UQCRC2) and 6 low-molecular weight proteins (UQCRH/QCR6, UQCRB/QCR7, UQCRQ/QCR8, UQCR10/QCR9, UQCR11/QCR10 and a cleavage product of UQCRFS1). This cytochrome bc1 complex then forms a dimer. Heme b is required as a cofactor.

It is found in the mitochondrion inner membrane. Component of the ubiquinol-cytochrome c reductase complex (complex III or cytochrome b-c1 complex) that is part of the mitochondrial respiratory chain. The b-c1 complex mediates electron transfer from ubiquinol to cytochrome c. Contributes to the generation of a proton gradient across the mitochondrial membrane that is then used for ATP synthesis. The chain is Cytochrome b (MT-CYB) from Akodon affinis (Colombian grass mouse).